Reading from the N-terminus, the 256-residue chain is Ribosomal RNA small subunit methyltransferase A (256 aa).

S-adenosyl-L-methionine-binding residues include Asn12, Leu14, Gly39, Glu60, Asp85, and Asn103.

This sequence belongs to the class I-like SAM-binding methyltransferase superfamily. rRNA adenine N(6)-methyltransferase family. RsmA subfamily.

The protein resides in the cytoplasm. The catalysed reaction is adenosine(1518)/adenosine(1519) in 16S rRNA + 4 S-adenosyl-L-methionine = N(6)-dimethyladenosine(1518)/N(6)-dimethyladenosine(1519) in 16S rRNA + 4 S-adenosyl-L-homocysteine + 4 H(+). In terms of biological role, specifically dimethylates two adjacent adenosines (A1518 and A1519) in the loop of a conserved hairpin near the 3'-end of 16S rRNA in the 30S particle. May play a critical role in biogenesis of 30S subunits. In Legionella pneumophila (strain Corby), this protein is Ribosomal RNA small subunit methyltransferase A.